A 434-amino-acid chain; its full sequence is Histidinol dehydrogenase (434 aa).

NAD(+) is bound by residues tyrosine 130, glutamine 188, and asparagine 211. Substrate contacts are provided by serine 237, glutamine 259, and histidine 262. Glutamine 259 and histidine 262 together coordinate Zn(2+). Residues glutamate 326 and histidine 327 each act as proton acceptor in the active site. Histidine 327, aspartate 360, glutamate 414, and histidine 419 together coordinate substrate. Aspartate 360 is a binding site for Zn(2+). Zn(2+) is bound at residue histidine 419.

This sequence belongs to the histidinol dehydrogenase family. Homodimer. Zn(2+) is required as a cofactor.

The catalysed reaction is L-histidinol + 2 NAD(+) + H2O = L-histidine + 2 NADH + 3 H(+). Its pathway is amino-acid biosynthesis; L-histidine biosynthesis; L-histidine from 5-phospho-alpha-D-ribose 1-diphosphate: step 9/9. Catalyzes the sequential NAD-dependent oxidations of L-histidinol to L-histidinaldehyde and then to L-histidine. This is Histidinol dehydrogenase from Shigella sonnei (strain Ss046).